The primary structure comprises 233 residues: Protein TIPIN homolog (233 aa).

Over residues 1 to 14 (MDEMEDFFENDELD) the composition is skewed to acidic residues. Disordered regions lie at residues 1-39 (MDEM…RVVE) and 134-233 (GETG…NNDW). Basic and acidic residues-rich tracts occupy residues 163–190 (DLFK…KTAE) and 197–216 (EEYR…AKEA). Positions 217–227 (ADEDALMEDFG) are enriched in acidic residues.

Belongs to the CSM3 family.

The protein resides in the cytoplasm. It localises to the nucleus. Functionally, required for normal progression of S-phase. Important for cell survival after DNA damage or replication stress. This Caenorhabditis elegans protein is Protein TIPIN homolog.